We begin with the raw amino-acid sequence, 61 residues long: Protein translocase subunit SecE (61 aa).

A helical membrane pass occupies residues 39 to 59; it reads LGIILIGLIGMLIRIMGILVL.

Belongs to the SecE/SEC61-gamma family. Component of the Sec protein translocase complex. Heterotrimer consisting of SecY (alpha), SecG (beta) and SecE (gamma) subunits. The heterotrimers can form oligomers, although 1 heterotrimer is thought to be able to translocate proteins. Interacts with the ribosome. May interact with SecDF, and other proteins may be involved.

It is found in the cell membrane. Functionally, essential subunit of the Sec protein translocation channel SecYEG. Clamps together the 2 halves of SecY. May contact the channel plug during translocation. The chain is Protein translocase subunit SecE from Pyrococcus abyssi (strain GE5 / Orsay).